Reading from the N-terminus, the 280-residue chain is Ribosomal RNA small subunit methyltransferase A (280 aa).

Positions 28, 30, 55, 77, 103, and 122 each coordinate S-adenosyl-L-methionine.

Belongs to the class I-like SAM-binding methyltransferase superfamily. rRNA adenine N(6)-methyltransferase family. RsmA subfamily.

Its subcellular location is the cytoplasm. The catalysed reaction is adenosine(1518)/adenosine(1519) in 16S rRNA + 4 S-adenosyl-L-methionine = N(6)-dimethyladenosine(1518)/N(6)-dimethyladenosine(1519) in 16S rRNA + 4 S-adenosyl-L-homocysteine + 4 H(+). Functionally, specifically dimethylates two adjacent adenosines (A1518 and A1519) in the loop of a conserved hairpin near the 3'-end of 16S rRNA in the 30S particle. May play a critical role in biogenesis of 30S subunits. This Roseobacter denitrificans (strain ATCC 33942 / OCh 114) (Erythrobacter sp. (strain OCh 114)) protein is Ribosomal RNA small subunit methyltransferase A.